Consider the following 462-residue polypeptide: Proteases secretion protein PrtF (462 aa).

A signal peptide spans 1-23; that stretch reads MRRKAVLLTVVLSLSGGSAQAMG.

This sequence belongs to the outer membrane factor (OMF) (TC 1.B.17) family.

The protein localises to the cell outer membrane. Functionally, involved in the secretion of proteases A, B, C and G. The sequence is that of Proteases secretion protein PrtF (prtF) from Dickeya chrysanthemi (Pectobacterium chrysanthemi).